Reading from the N-terminus, the 348-residue chain is Chemokine C-C motif receptor-like 2 (348 aa).

The Extracellular segment spans residues 1-43 (MANYTPAPEDDYDVFIEDDLSDDEIEPCTPYDPKILSAQLVPY). Residues 44–64 (LYTTVFMVGLLDNILVVFILV) traverse the membrane as a helical segment. Residues 65-76 (KYKGLRQAENMS) lie on the Cytoplasmic side of the membrane. A helical transmembrane segment spans residues 77-97 (FLNLALSNLGFLLTLPFWAYA). The Extracellular segment spans residues 98–110 (ASHGEGFDDPLCK). The cysteines at positions 109 and 187 are disulfide-linked. The helical transmembrane segment at 111–131 (ILLLLYSIGLYSEAFFNVLLT) threads the bilayer. At 132-150 (VQRYKEFFHVRRRFSACRT) the chain is on the cytoplasmic side. Residues 151-171 (VAGSIFISVLVWVTATLVTLP) traverse the membrane as a helical segment. Residues 172-204 (ELVSYKPQMQSQKYKCFFTGLHFLPADETFWKH) lie on the Extracellular side of the membrane. Residues 205–225 (FLTLKMNILGFLLPLFAFVYC) form a helical membrane-spanning segment. At 226–244 (YVRMRKTLQFRERNYGLFK) the chain is on the cytoplasmic side. The chain crosses the membrane as a helical span at residues 245–265 (LVFTIMAVFLLMWGPYNIVLF). Topologically, residues 266–292 (LSAFNEHFSLHGCGSSYNLNKSVQITR) are extracellular. A glycan (N-linked (GlcNAc...) asparagine) is linked at asparagine 285. Residues 293-313 (IIAATHCCVNPLLYVFLDKAF) traverse the membrane as a helical segment. The Cytoplasmic segment spans residues 314 to 348 (RKHLCHLFYLCSDTAPQPTEEPAQGASGEEYHLSS).

It belongs to the G-protein coupled receptor 1 family.

The protein resides in the cell membrane. Its function is as follows. Receptor for CCL19 and chemerin/RARRES2. Does not appear to be a signaling receptor, but may have a role in modulating chemokine-triggered immune responses by capturing and internalizing CCL19 or by presenting RARRES2 ligand to CMKLR1, a functional signaling receptor. Plays a critical role for the development of Th2 responses. In Bos taurus (Bovine), this protein is Chemokine C-C motif receptor-like 2 (CCRL2).